Reading from the N-terminus, the 400-residue chain is Protein TFG (400 aa).

Met1 is modified (N-acetylmethionine). A PB1 domain is found at 10–91; the sequence is KLIIKAQLGE…RILKLTLFVN (82 aa). Ser50 carries the post-translational modification Phosphoserine. The stretch at 97 to 124 forms a coiled coil; the sequence is LESSQVKYLRRELIELRNKVNRLLDSLE. 2 disordered regions span residues 120-160 and 187-400; these read LDSL…STQV and LTDD…PGYR. A compositionally biased stretch (polar residues) spans 150–160; it reads SDSSGKQSTQV. Ser197 is modified (phosphoserine). Low complexity-rich tracts occupy residues 237 to 258, 265 to 298, and 307 to 327; these read GQIE…AQQP, PQQY…PTSQ, and QPQQ…YPAQ. Over residues 328–340 the composition is skewed to polar residues; it reads TYTAQTSQPTNYT. An omega-N-methylarginine mark is found at Arg385 and Arg400.

In terms of assembly, self-associates to form an oligomeric complex. Interacts with PDCD6; promoting localization and polymerization of TFG at endoplasmic reticulum exit site. Interacts with SEC16B. In terms of tissue distribution, ubiquitous.

It localises to the endoplasmic reticulum. Its function is as follows. Plays a role in the normal dynamic function of the endoplasmic reticulum (ER) and its associated microtubules. Required for secretory cargo traffic from the endoplasmic reticulum to the Golgi apparatus. The chain is Protein TFG (TFG) from Homo sapiens (Human).